A 201-amino-acid chain; its full sequence is Recombination protein RecR (201 aa).

A C4-type zinc finger spans residues 57–72 (CADCRTFTEQEVCNIC). The Toprim domain maps to 81–176 (GQICVVESPA…EASRIAHGVP (96 aa)).

Belongs to the RecR family.

May play a role in DNA repair. It seems to be involved in an RecBC-independent recombinational process of DNA repair. It may act with RecF and RecO. This is Recombination protein RecR from Escherichia coli O6:K15:H31 (strain 536 / UPEC).